A 117-amino-acid polypeptide reads, in one-letter code: Immunoglobulin heavy variable 1-69D (117 aa).

The N-terminal stretch at 1–19 is a signal peptide; that stretch reads MDWTWRFLFVVAAATGVQS. Gln-20 carries the pyrrolidone carboxylic acid modification. A framework-1 region spans residues 20 to 44; it reads QVQLVQSGAEVKKPGSSVKVSCKAS. In terms of domain architecture, Ig-like spans 20-117; it reads QVQLVQSGAE…EDTAVYYCAR (98 aa). A disulfide bridge links Cys-41 with Cys-115. Residues 45 to 52 form a complementarity-determining-1 region; sequence GGTFSSYA. The segment at 53–69 is framework-2; it reads ISWVRQAPGQGLEWMGG. A complementarity-determining-2 region spans residues 70–77; sequence IIPIFGTA. The segment at 78-115 is framework-3; the sequence is NYAQKFQGRVTITADESTSTAYMELSSLRSEDTAVYYC. The interval 116–117 is complementarity-determining-3; the sequence is AR.

Immunoglobulins are composed of two identical heavy chains and two identical light chains; disulfide-linked.

It localises to the secreted. The protein localises to the cell membrane. In terms of biological role, v region of the variable domain of immunoglobulin heavy chains that participates in the antigen recognition. Immunoglobulins, also known as antibodies, are membrane-bound or secreted glycoproteins produced by B lymphocytes. In the recognition phase of humoral immunity, the membrane-bound immunoglobulins serve as receptors which, upon binding of a specific antigen, trigger the clonal expansion and differentiation of B lymphocytes into immunoglobulins-secreting plasma cells. Secreted immunoglobulins mediate the effector phase of humoral immunity, which results in the elimination of bound antigens. The antigen binding site is formed by the variable domain of one heavy chain, together with that of its associated light chain. Thus, each immunoglobulin has two antigen binding sites with remarkable affinity for a particular antigen. The variable domains are assembled by a process called V-(D)-J rearrangement and can then be subjected to somatic hypermutations which, after exposure to antigen and selection, allow affinity maturation for a particular antigen. This chain is Immunoglobulin heavy variable 1-69D, found in Homo sapiens (Human).